A 156-amino-acid chain; its full sequence is Transcription antitermination protein NusB (156 aa).

This sequence belongs to the NusB family.

In terms of biological role, involved in transcription antitermination. Required for transcription of ribosomal RNA (rRNA) genes. Binds specifically to the boxA antiterminator sequence of the ribosomal RNA (rrn) operons. The chain is Transcription antitermination protein NusB from Rickettsia felis (strain ATCC VR-1525 / URRWXCal2) (Rickettsia azadi).